A 1232-amino-acid chain; its full sequence is Chromosome-associated kinesin KIF4A (1232 aa).

Residues 9 to 336 (PVRVALRCRP…LRYADRARKI (328 aa)) enclose the Kinesin motor domain. Residue 88–95 (GQTGSGKT) coordinates ATP. Residues 350–999 (ELNHLKQQVQ…IKQKLTLLQV (650 aa)) adopt a coiled-coil conformation. At S394 the chain carries Phosphoserine. Positions 496–515 (AQVETSPETSRSSDAFTTQH) are disordered. Polar residues predominate over residues 497–515 (QVETSPETSRSSDAFTTQH). The required for the interaction with PRC1 stretch occupies residues 663 to 1232 (QWKQKKDKEV…GCSPIEEEAH (570 aa)). Positions 793–798 (PKLRRR) match the Nuclear localization signal motif. T799 is modified (phosphothreonine). A phosphoserine mark is found at S801, S810, S815, and S951. Residue T995 is modified to Phosphothreonine. A globular region spans residues 1000–1232 (ASRQKHLPKD…GCSPIEEEAH (233 aa)). S1001, S1013, S1017, S1028, and S1126 each carry phosphoserine. The segment at 1086–1144 (CSCKGWCGNKQCGCRKQKSDCGVDCCCDPTKCRNRQQGKDSLGTVERTQDSEGSFKLED) is CRD; required for [4Fe-4S] cluster binding and localization to the spindle midzone and midbody during anaphase and telophase. The disordered stretch occupies residues 1122–1142 (QGKDSLGTVERTQDSEGSFKL). Over residues 1132-1142 (RTQDSEGSFKL) the composition is skewed to basic and acidic residues. Residue T1181 is modified to Phosphothreonine. S1186 carries the phosphoserine modification. Residue K1194 forms a Glycyl lysine isopeptide (Lys-Gly) (interchain with G-Cter in SUMO2) linkage. S1225 is subject to Phosphoserine.

This sequence belongs to the TRAFAC class myosin-kinesin ATPase superfamily. Kinesin family. Chromokinesin subfamily. Interacts with the cytosolic iron-sulfur protein assembly (CIA) complex components CIAO2B and MMS19; the interactions facilitate the transfer of Fe-S clusters to KIF4A to ensure proper localization of KIF4A to mitotic machinery components. Interacts (via C-terminus) with unphosphorylated PRC1 (via N-terminus); the interaction is required for the progression of mitosis. The cofactor is [2Fe-2S] cluster. It depends on [4Fe-4S] cluster as a cofactor. In terms of tissue distribution, highly expressed in hematopoietic tissues, fetal liver, spleen, thymus and adult thymus and bone marrow. Lower levels are found in heart, testis, kidney, colon and lung.

It is found in the nucleus matrix. It localises to the cytoplasm. The protein resides in the cytoskeleton. Its subcellular location is the spindle. The protein localises to the midbody. It is found in the chromosome. In terms of biological role, iron-sulfur (Fe-S) cluster binding motor protein that has a role in chromosome segregation during mitosis. Translocates PRC1 to the plus ends of interdigitating spindle microtubules during the metaphase to anaphase transition, an essential step for the formation of an organized central spindle midzone and midbody and for successful cytokinesis. May play a role in mitotic chromosomal positioning and bipolar spindle stabilization. In Homo sapiens (Human), this protein is Chromosome-associated kinesin KIF4A (KIF4A).